A 138-amino-acid chain; its full sequence is Basic phospholipase A2 BP-I (138 aa).

Positions 1-16 (MRTLWIMAVLLLGVDG) are cleaved as a signal peptide. 7 cysteine pairs are disulfide-bonded: Cys-42/Cys-132, Cys-44/Cys-60, Cys-59/Cys-112, Cys-65/Cys-138, Cys-66/Cys-105, Cys-73/Cys-98, and Cys-91/Cys-103. Ca(2+) contacts are provided by Gly-45 and Gly-47. Residue His-63 is part of the active site. The active site involves Asp-106.

It belongs to the phospholipase A2 family. Group II subfamily. K49 sub-subfamily. The cofactor is Ca(2+). As to expression, expressed by the venom gland.

It is found in the secreted. The enzyme catalyses a 1,2-diacyl-sn-glycero-3-phosphocholine + H2O = a 1-acyl-sn-glycero-3-phosphocholine + a fatty acid + H(+). In terms of biological role, snake venom phospholipase A2 (PLA2) that has strong myotoxic activity with a low phospholipase A2 activity. PLA2 catalyzes the calcium-dependent hydrolysis of the 2-acyl groups in 3-sn-phosphoglycerides. This Protobothrops flavoviridis (Habu) protein is Basic phospholipase A2 BP-I.